The sequence spans 24 residues: Cryptonin (24 aa).

Functionally, antimicrobial peptide, active against the Gram-negative bacterium E.coli K12-594 (MIC=3.12 ug/ml), the Gram-positive bacteria B.subtilis KCTC 3086 (MIC=3.12 ug/ml), S.aureus KCTC 1928 (MIC=25 ug/ml) and M.luteus KCTC 3063 (MIC=1.56 ug/ml), the antibiotic resistant bacteria methicillin-resistant S.aureus (MRSA) (MIC=25 ug/ml) and vancomycin-resistant Enterococci (VRE) (MIC=25 ug/ml), and the fungi C.albicans KCTC 7965 (MIC=50 ug/ml) and C.tropicalis KCTC 1925 (MIC=3.12 ug/ml). Has very low hemolytic activity on rat erythrocytes. This Cryptotympana dubia (Korean horse cicada) protein is Cryptonin.